Reading from the N-terminus, the 177-residue chain is Large ribosomal subunit protein uL6 (177 aa).

It belongs to the universal ribosomal protein uL6 family. Part of the 50S ribosomal subunit.

This protein binds to the 23S rRNA, and is important in its secondary structure. It is located near the subunit interface in the base of the L7/L12 stalk, and near the tRNA binding site of the peptidyltransferase center. The protein is Large ribosomal subunit protein uL6 of Vibrio vulnificus (strain CMCP6).